Consider the following 142-residue polypeptide: Large ribosomal subunit protein uL13 (142 aa).

The protein belongs to the universal ribosomal protein uL13 family. As to quaternary structure, part of the 50S ribosomal subunit.

This protein is one of the early assembly proteins of the 50S ribosomal subunit, although it is not seen to bind rRNA by itself. It is important during the early stages of 50S assembly. This is Large ribosomal subunit protein uL13 from Serratia proteamaculans (strain 568).